A 349-amino-acid polypeptide reads, in one-letter code: Anthranilate phosphoribosyltransferase (349 aa).

5-phospho-alpha-D-ribose 1-diphosphate is bound by residues Gly82, 85 to 86, 92 to 95, 110 to 118, and Ser122; these read GD, NVST, and KHGNRAVSG. Anthranilate is bound at residue Gly82. Ser94 is a binding site for Mg(2+). Asn113 contacts anthranilate. Arg168 contacts anthranilate. Residues Asp227 and Glu228 each coordinate Mg(2+).

The protein belongs to the anthranilate phosphoribosyltransferase family. As to quaternary structure, homodimer. The cofactor is Mg(2+).

The catalysed reaction is N-(5-phospho-beta-D-ribosyl)anthranilate + diphosphate = 5-phospho-alpha-D-ribose 1-diphosphate + anthranilate. Its pathway is amino-acid biosynthesis; L-tryptophan biosynthesis; L-tryptophan from chorismate: step 2/5. Catalyzes the transfer of the phosphoribosyl group of 5-phosphorylribose-1-pyrophosphate (PRPP) to anthranilate to yield N-(5'-phosphoribosyl)-anthranilate (PRA). The sequence is that of Anthranilate phosphoribosyltransferase from Pseudomonas entomophila (strain L48).